Reading from the N-terminus, the 91-residue chain is DNA-binding protein HU (91 aa).

Belongs to the bacterial histone-like protein family.

Functionally, histone-like DNA-binding protein which is capable of wrapping DNA to stabilize it, and thus to prevent its denaturation under extreme environmental conditions. Also seems to act as a fortuitous virulence factor in delayed sequelae by binding to heparan sulfate-proteoglycans in the extracellular matrix of target organs and acting as a nidus for in situ immune complex formation. The sequence is that of DNA-binding protein HU (hup) from Streptococcus gordonii.